The primary structure comprises 280 residues: Truncated lectin 2 (280 aa).

The signal sequence occupies residues 1-26 (MSSSNFSCILSISLTFFILLLNKVNS). Mn(2+) is bound by residues Glu148 and Asp150. Asp150, Phe152, Asn154, and Asp158 together coordinate Ca(2+). Asp158 provides a ligand contact to Mn(2+). N-linked (GlcNAc...) asparagine glycosylation is present at Asn163. Mn(2+) is bound at residue His170. A glycan (N-linked (GlcNAc...) asparagine) is linked at Asn272.

Belongs to the leguminous lectin family.

The sequence is that of Truncated lectin 2 (LEC2) from Medicago truncatula (Barrel medic).